The primary structure comprises 206 residues: Imidazoleglycerol-phosphate dehydratase (206 aa).

The interval 1 to 21 (MTALDSSRLLQPRTASVHRRT) is disordered.

The protein belongs to the imidazoleglycerol-phosphate dehydratase family.

It is found in the cytoplasm. It catalyses the reaction D-erythro-1-(imidazol-4-yl)glycerol 3-phosphate = 3-(imidazol-4-yl)-2-oxopropyl phosphate + H2O. Its pathway is amino-acid biosynthesis; L-histidine biosynthesis; L-histidine from 5-phospho-alpha-D-ribose 1-diphosphate: step 6/9. The protein is Imidazoleglycerol-phosphate dehydratase of Synechococcus sp. (strain JA-2-3B'a(2-13)) (Cyanobacteria bacterium Yellowstone B-Prime).